Reading from the N-terminus, the 113-residue chain is uncharacterized protein (113 aa).

The interval 28-55 (CDGGPRRPLSRRGEEARRARAPSYEEQE) is disordered.

This is an uncharacterized protein from Human cytomegalovirus (strain AD169) (HHV-5).